Here is a 193-residue protein sequence, read N- to C-terminus: dCTP deaminase (193 aa).

Residues 110 to 115 (RSSLAR), D128, 136 to 138 (VLE), Y171, K178, and Q182 each bind dCTP. E138 acts as the Proton donor/acceptor in catalysis. Residues 169–193 (RPYNRRQDAKYKDQQGAVASRIDKD) form a disordered region.

This sequence belongs to the dCTP deaminase family. In terms of assembly, homotrimer.

The catalysed reaction is dCTP + H2O + H(+) = dUTP + NH4(+). Its pathway is pyrimidine metabolism; dUMP biosynthesis; dUMP from dCTP (dUTP route): step 1/2. Catalyzes the deamination of dCTP to dUTP. This chain is dCTP deaminase, found in Pectobacterium atrosepticum (strain SCRI 1043 / ATCC BAA-672) (Erwinia carotovora subsp. atroseptica).